Consider the following 88-residue polypeptide: UPF0297 protein SSU98_0066 (88 aa).

It belongs to the UPF0297 family.

The sequence is that of UPF0297 protein SSU98_0066 from Streptococcus suis (strain 98HAH33).